A 500-amino-acid chain; its full sequence is Probable cytosol aminopeptidase (500 aa).

Positions 264 and 269 each coordinate Mn(2+). Residue K276 is part of the active site. The Mn(2+) site is built by D287, D346, and E348. The active site involves R350.

It belongs to the peptidase M17 family. It depends on Mn(2+) as a cofactor.

The protein resides in the cytoplasm. The enzyme catalyses Release of an N-terminal amino acid, Xaa-|-Yaa-, in which Xaa is preferably Leu, but may be other amino acids including Pro although not Arg or Lys, and Yaa may be Pro. Amino acid amides and methyl esters are also readily hydrolyzed, but rates on arylamides are exceedingly low.. It carries out the reaction Release of an N-terminal amino acid, preferentially leucine, but not glutamic or aspartic acids.. Its function is as follows. Presumably involved in the processing and regular turnover of intracellular proteins. Catalyzes the removal of unsubstituted N-terminal amino acids from various peptides. This is Probable cytosol aminopeptidase from Nitrobacter winogradskyi (strain ATCC 25391 / DSM 10237 / CIP 104748 / NCIMB 11846 / Nb-255).